Here is a 185-residue protein sequence, read N- to C-terminus: ATP-dependent protease subunit HslV (185 aa).

Residue T2 is part of the active site. Positions 157, 160, and 163 each coordinate Na(+).

The protein belongs to the peptidase T1B family. HslV subfamily. A double ring-shaped homohexamer of HslV is capped on each side by a ring-shaped HslU homohexamer. The assembly of the HslU/HslV complex is dependent on binding of ATP.

It is found in the cytoplasm. The enzyme catalyses ATP-dependent cleavage of peptide bonds with broad specificity.. Allosterically activated by HslU binding. Protease subunit of a proteasome-like degradation complex believed to be a general protein degrading machinery. The protein is ATP-dependent protease subunit HslV of Vibrio cholerae serotype O1 (strain ATCC 39315 / El Tor Inaba N16961).